The sequence spans 213 residues: High frequency lysogenization protein HflD homolog (213 aa).

A coiled-coil region spans residues 79–122; it reads QGLNAELTRYTLSLMVLERKLSSAKGALNTLGDRINGLQRQLDH.

The protein belongs to the HflD family.

It is found in the cytoplasm. The protein resides in the cell inner membrane. The chain is High frequency lysogenization protein HflD homolog from Salmonella dublin (strain CT_02021853).